We begin with the raw amino-acid sequence, 377 residues long: Chaperone protein DnaJ (377 aa).

The J domain maps to 5-69; the sequence is DYYEVLGVSK…NKRANYDQFG (65 aa). A CR-type zinc finger spans residues 134 to 216; the sequence is GTEKEISIRK…CHGKGTETKN (83 aa). Zn(2+)-binding residues include cysteine 147, cysteine 150, cysteine 164, cysteine 167, cysteine 190, cysteine 193, cysteine 204, and cysteine 207. CXXCXGXG motif repeat units lie at residues 147–154, 164–171, 190–197, and 204–211; these read CETCDGSG, CHYCNGSG, CPVCNGTG, and CPTCHGKG.

This sequence belongs to the DnaJ family. In terms of assembly, homodimer. The cofactor is Zn(2+).

The protein resides in the cytoplasm. In terms of biological role, participates actively in the response to hyperosmotic and heat shock by preventing the aggregation of stress-denatured proteins and by disaggregating proteins, also in an autonomous, DnaK-independent fashion. Unfolded proteins bind initially to DnaJ; upon interaction with the DnaJ-bound protein, DnaK hydrolyzes its bound ATP, resulting in the formation of a stable complex. GrpE releases ADP from DnaK; ATP binding to DnaK triggers the release of the substrate protein, thus completing the reaction cycle. Several rounds of ATP-dependent interactions between DnaJ, DnaK and GrpE are required for fully efficient folding. Also involved, together with DnaK and GrpE, in the DNA replication of plasmids through activation of initiation proteins. The chain is Chaperone protein DnaJ from Staphylococcus carnosus (strain TM300).